The sequence spans 351 residues: Histidine protein kinase SaeS (351 aa).

Transmembrane regions (helical) follow at residues 9–29 (IIIG…IAYI) and 40–60 (TLTL…SIFI). In terms of domain architecture, HAMP spans 61–114 (NPLIQKIKQFNIKTKQFANGNYASNDKTFNSPKEIYELNQSFNKMASEITQQMN). In terms of domain architecture, Histidine kinase spans 129–348 (NLAHDLKTPL…TMTVTLHKLD (220 aa)). Histidine 132 carries the phosphohistidine; by autocatalysis modification.

Autophosphorylated.

The protein localises to the cell membrane. The catalysed reaction is ATP + protein L-histidine = ADP + protein N-phospho-L-histidine.. Member of the two-component regulatory system SaeR/SaeS involved in the regulation of staphylococcal virulence factors in a strain-dependent fashion. Probably functions as a membrane-associated protein kinase that upon sensing the appropriate signal, autophosphorylates and in turn activates the cytosolic response regulator SaeR. This is Histidine protein kinase SaeS (saeS) from Staphylococcus aureus (strain USA300).